The following is a 3589-amino-acid chain: D-lysergyl-peptide-synthetase subunit 1 (3589 aa).

An adenylation (A) domain 1 region spans residues 344–742; that stretch reads NCHSRPDSLA…IGRKDLQVKV (399 aa). In terms of domain architecture, Carrier 1 spans 883 to 952; it reads VERRLQLLFA…KLRDLAAASS (70 aa). Residue serine 915 is modified to O-(pantetheine 4'-phosphoryl)serine. A condensation (C) domain 1 region spans residues 995–1380; the sequence is EDIYPCTSLQ…SQFQHILTQI (386 aa). The interval 1424 to 1826 is adenylation (A) domain 2; it reads QAKAQMQPEA…RRKDSQVKLR (403 aa). Residues 1974 to 2042 enclose the Carrier 2 domain; that stretch reads LERELQKIWA…TIEKLAAAAV (69 aa). Residue serine 2006 is modified to O-(pantetheine 4'-phosphoryl)serine. The interval 2087-2509 is condensation (C) domain 2; it reads VEDIYPCSPI…IEMLDEEHRS (423 aa). The adenylation (A) domain 3 stretch occupies residues 2534-2929; the sequence is CLESPESPAI…GRKDDQVKIR (396 aa). The 69-residue stretch at 3064-3132 folds into the Carrier 3 domain; sequence LETRLQELVG…RLSELAVVLN (69 aa). At serine 3096 the chain carries O-(pantetheine 4'-phosphoryl)serine. The tract at residues 3187–3585 is cyclization (Cyc) domain; sequence TNFIALHFSQ…TYPESLVSEL (399 aa).

Belongs to the NRP synthetase family.

Its pathway is alkaloid biosynthesis; ergot alkaloid biosynthesis. Functionally, D-lysergyl-peptide-synthetase subunit 1; part of the gene cluster that mediates the biosynthesis of fungal ergot alkaloid ergovaline, the predominant ergopeptine product in E.festucae var. lolii. DmaW catalyzes the first step of ergot alkaloid biosynthesis by condensing dimethylallyl diphosphate (DMAP) and tryptophan to form 4-dimethylallyl-L-tryptophan. The second step is catalyzed by the methyltransferase easF that methylates 4-dimethylallyl-L-tryptophan in the presence of S-adenosyl-L-methionine, resulting in the formation of 4-dimethylallyl-L-abrine. The catalase easC and the FAD-dependent oxidoreductase easE then transform 4-dimethylallyl-L-abrine to chanoclavine-I which is further oxidized by easD in the presence of NAD(+), resulting in the formation of chanoclavine-I aldehyde. Agroclavine dehydrogenase easG then mediates the conversion of chanoclavine-I aldehyde to agroclavine via a non-enzymatic adduct reaction: the substrate is an iminium intermediate that is formed spontaneously from chanoclavine-I aldehyde in the presence of glutathione. The presence of easA is not required to complete this reaction. Further conversion of agroclavine to paspalic acid is a two-step process involving oxidation of agroclavine to elymoclavine and of elymoclavine to paspalic acid, the second step being performed by the elymoclavine oxidase cloA. Paspalic acid is then further converted to D-lysergic acid. Ergovaline is assembled from D-lysergic acid and three different amino acids by the D-lysergyl-peptide-synthetase composed of a monomudular (lpsB) and a trimodular (lpsA) nonribosomal peptide synthetase subunit. The chain is D-lysergyl-peptide-synthetase subunit 1 from Epichloe festucae var. lolii (Neotyphodium lolii).